We begin with the raw amino-acid sequence, 144 residues long: Prefoldin subunit alpha (144 aa).

This sequence belongs to the prefoldin alpha subunit family. In terms of assembly, heterohexamer of two alpha and four beta subunits.

The protein localises to the cytoplasm. Molecular chaperone capable of stabilizing a range of proteins. Seems to fulfill an ATP-independent, HSP70-like function in archaeal de novo protein folding. The polypeptide is Prefoldin subunit alpha (Methanococcus maripaludis (strain C5 / ATCC BAA-1333)).